The chain runs to 634 residues: Acetylcholinesterase (634 aa).

An N-terminal signal peptide occupies residues 1–23 (MKTSDILLLPTVLLTFLFHNCFA). Cys-91 and Cys-118 are oxidised to a cystine. Residues Asn-133 and Asn-184 are each glycosylated (N-linked (GlcNAc...) asparagine). Ser-225 serves as the catalytic Acyl-ester intermediate. Cys-279 and Cys-290 are joined by a disulfide. N-linked (GlcNAc...) asparagine glycosylation is present at Asn-283. Glu-352 (charge relay system) is an active-site residue. N-linked (GlcNAc...) asparagine glycosylation is present at Asn-368. Cys-427 and Cys-580 are joined by a disulfide. Catalysis depends on His-495, which acts as the Charge relay system. N-linked (GlcNAc...) asparagine glycosylation is found at Asn-512 and Asn-592.

This sequence belongs to the type-B carboxylesterase/lipase family. Dimers and collagen-tailed forms, in which catalytic tetramers are associated with anchoring proteins that attach them to the basal lamina or to cell membranes. In the collagen-tailed forms, subunits are associated with a specific collagen, COLQ, which triggers the formation of isoform T tetramers from dimers.

Its subcellular location is the synapse. It localises to the secreted. The protein resides in the cell membrane. It catalyses the reaction acetylcholine + H2O = choline + acetate + H(+). Terminates signal transduction at the neuromuscular junction by rapid hydrolysis of the acetylcholine released into the synaptic cleft. In Danio rerio (Zebrafish), this protein is Acetylcholinesterase (ache).